A 668-amino-acid chain; its full sequence is DNA ligase (668 aa).

Residues D31 to D35, S80 to L81, and E111 each bind NAD(+). K113 serves as the catalytic N6-AMP-lysine intermediate. 4 residues coordinate NAD(+): R134, E170, K285, and K309. Positions 403, 406, 421, and 427 each coordinate Zn(2+). The BRCT domain occupies N587–E668.

The protein belongs to the NAD-dependent DNA ligase family. LigA subfamily. Requires Mg(2+) as cofactor. Mn(2+) is required as a cofactor.

It catalyses the reaction NAD(+) + (deoxyribonucleotide)n-3'-hydroxyl + 5'-phospho-(deoxyribonucleotide)m = (deoxyribonucleotide)n+m + AMP + beta-nicotinamide D-nucleotide.. Its function is as follows. DNA ligase that catalyzes the formation of phosphodiester linkages between 5'-phosphoryl and 3'-hydroxyl groups in double-stranded DNA using NAD as a coenzyme and as the energy source for the reaction. It is essential for DNA replication and repair of damaged DNA. This Flavobacterium johnsoniae (strain ATCC 17061 / DSM 2064 / JCM 8514 / BCRC 14874 / CCUG 350202 / NBRC 14942 / NCIMB 11054 / UW101) (Cytophaga johnsonae) protein is DNA ligase.